The following is a 292-amino-acid chain: D-tagatose-1,6-bisphosphate aldolase subunit KbaY (292 aa).

The active-site Proton donor is D82. H83 and H180 together coordinate Zn(2+). G181 is a binding site for dihydroxyacetone phosphate. Residue H208 participates in Zn(2+) binding. Residues 209 to 211 (GAS) and 230 to 233 (NVAT) contribute to the dihydroxyacetone phosphate site.

It belongs to the class II fructose-bisphosphate aldolase family. TagBP aldolase KbaY subfamily. As to quaternary structure, homotetramer. Forms a complex with KbaZ. Zn(2+) serves as cofactor.

It carries out the reaction D-tagatofuranose 1,6-bisphosphate = D-glyceraldehyde 3-phosphate + dihydroxyacetone phosphate. It functions in the pathway carbohydrate metabolism; D-tagatose 6-phosphate degradation; D-glyceraldehyde 3-phosphate and glycerone phosphate from D-tagatose 6-phosphate: step 2/2. Functionally, catalytic subunit of the tagatose-1,6-bisphosphate aldolase KbaYZ, which catalyzes the reversible aldol condensation of dihydroxyacetone phosphate (DHAP or glycerone-phosphate) with glyceraldehyde 3-phosphate (G3P) to produce tagatose 1,6-bisphosphate (TBP). Requires KbaZ subunit for full activity and stability. The protein is D-tagatose-1,6-bisphosphate aldolase subunit KbaY of Enterobacter sp. (strain 638).